The chain runs to 88 residues: MSSLSTTAIQSLDEASRKEIMQFVESEQSKSKVQSSIHNFTDMCFKKCNKDKPITSATLDGQEEACLKNCLNRFLDTNIKVVEALQGR.

Residues 44–70 (CFKKCNKDKPITSATLDGQEEACLKNC) carry the Twin CX3C motif motif. 2 disulfides stabilise this stretch: Cys44-Cys70 and Cys48-Cys66.

This sequence belongs to the small Tim family. Heterohexamer; composed of 3 copies of TIM8 and 3 copies of TIM13, named soluble 70 kDa complex. Associates with the TIM22 complex, whose core is composed of TIM22 and TIM54. Interacts with the transmembrane regions of multi-pass transmembrane proteins in transit.

It localises to the mitochondrion inner membrane. Its function is as follows. Mitochondrial intermembrane chaperone that participates in the import and insertion of some multi-pass transmembrane proteins into the mitochondrial inner membrane. Also required for the transfer of beta-barrel precursors from the TOM complex to the sorting and assembly machinery (SAM complex) of the outer membrane. Acts as a chaperone-like protein that protects the hydrophobic precursors from aggregation and guide them through the mitochondrial intermembrane space. The TIM8-TIM13 complex is non essential and only mediates the import of few proteins, while the predominant TIM9-TIM10 70 kDa complex is crucial and mediates the import of much more proteins. This is Mitochondrial import inner membrane translocase subunit TIM8 (TIM8) from Candida albicans (strain SC5314 / ATCC MYA-2876) (Yeast).